The chain runs to 274 residues: NADH-ubiquinone oxidoreductase chain 2 (274 aa).

Transmembrane regions (helical) follow at residues 28-48, 54-74, 79-99, 107-127, 128-148, 171-191, 206-226, and 254-274; these read MIIMSALLLKSGAAPFHFWFP, LTWMNALMLMTWQKIAPLMLI, IKYLLLISVILSVIIGAIGGL, LMAFSSINHLGWMLSSLMFSE, SIWLIYFFFYSFLSFVLTFMF, FTLFMNFLSLGGLPPFLGFLP, FLLTLMMMSTLITLFFYLRIC, and LIMTFFSIFGLFMISLFYFMF.

It belongs to the complex I subunit 2 family.

The protein resides in the mitochondrion inner membrane. It carries out the reaction a ubiquinone + NADH + 5 H(+)(in) = a ubiquinol + NAD(+) + 4 H(+)(out). Functionally, core subunit of the mitochondrial membrane respiratory chain NADH dehydrogenase (Complex I) that is believed to belong to the minimal assembly required for catalysis. Complex I functions in the transfer of electrons from NADH to the respiratory chain. The immediate electron acceptor for the enzyme is believed to be ubiquinone. This chain is NADH-ubiquinone oxidoreductase chain 2 (mt:ND2), found in Drosophila sechellia (Fruit fly).